The chain runs to 563 residues: Arginine--tRNA ligase (563 aa).

Residues 121-131 (PNIAKPFSIGH) carry the 'HIGH' region motif.

Belongs to the class-I aminoacyl-tRNA synthetase family. As to quaternary structure, monomer.

It localises to the cytoplasm. It carries out the reaction tRNA(Arg) + L-arginine + ATP = L-arginyl-tRNA(Arg) + AMP + diphosphate. This is Arginine--tRNA ligase from Streptococcus pneumoniae (strain P1031).